Consider the following 256-residue polypeptide: GDSL esterase/lipase At1g18120 (256 aa).

The signal sequence occupies residues Met-1 to Ala-49. Residue Ser-67 is the Nucleophile of the active site. N-linked (GlcNAc...) asparagine glycosylation occurs at Asn-181.

It belongs to the 'GDSL' lipolytic enzyme family.

It is found in the secreted. In Arabidopsis thaliana (Mouse-ear cress), this protein is GDSL esterase/lipase At1g18120.